The primary structure comprises 20 residues: Putative 60 kDa spermidine-binding protein (20 aa).

Residues 1-20 (SXAAVVEPPETSQNRIAKGE) are disordered. Over residues 10-20 (ETSQNRIAKGE) the composition is skewed to polar residues.

Dimer of 18 kDa and 60 kDa subunit.

It localises to the microsome membrane. The protein resides in the endoplasmic reticulum membrane. Functionally, may have spermidine-binding activity. This is Putative 60 kDa spermidine-binding protein from Zea mays (Maize).